The following is a 328-amino-acid chain: tRNA-modifying protein YgfZ (328 aa).

Residues W28 and W190 each contribute to the folate site.

This sequence belongs to the tRNA-modifying YgfZ family.

The protein resides in the cytoplasm. Folate-binding protein involved in regulating the level of ATP-DnaA and in the modification of some tRNAs. It is probably a key factor in regulatory networks that act via tRNA modification, such as initiation of chromosomal replication. This chain is tRNA-modifying protein YgfZ, found in Sodalis glossinidius (strain morsitans).